The primary structure comprises 438 residues: Beta-1,3-galactosyl-O-glycosyl-glycoprotein beta-1,6-N-acetylglucosaminyltransferase 3 (438 aa).

Topologically, residues 1 to 6 (MVQWKR) are cytoplasmic. The chain crosses the membrane as a helical; Signal-anchor for type II membrane protein span at residues 7 to 26 (LCQLHYLWALGCYMLLATVA). Topologically, residues 27 to 438 (LKLSFRLKCD…RYKAIYGTEL (412 aa)) are lumenal. Intrachain disulfides connect Cys70–Cys227, Cys161–Cys382, Cys182–Cys209, and Cys391–Cys423. Asn289 carries N-linked (GlcNAc...) asparagine glycosylation.

This sequence belongs to the glycosyltransferase 14 family. Post-translationally, N-glycosylated. Primarily expressed in mucus-secreting tissues. Expressed in colon, kidney, small intestine, trachea, and stomach, where mucin is produced.

It localises to the golgi apparatus membrane. The catalysed reaction is a 3-O-[beta-D-galactosyl-(1-&gt;3)-N-acetyl-alpha-D-galactosaminyl]-L-seryl-[protein] + UDP-N-acetyl-alpha-D-glucosamine = 3-O-{beta-D-galactosyl-(1-&gt;3)-[N-acetyl-beta-D-glucosaminyl-(1-&gt;6)]-N-acetyl-alpha-D-galactosaminyl}-L-seryl-[protein] + UDP + H(+). The enzyme catalyses a 3-O-[beta-D-galactosyl-(1-&gt;3)-N-acetyl-alpha-D-galactosaminyl]-L-threonyl-[protein] + UDP-N-acetyl-alpha-D-glucosamine = a 3-O-{beta-D-galactosyl-(1-&gt;3)-[N-acetyl-beta-D-glucosaminyl-(1-&gt;6)]-N-acetyl-alpha-D-galactosaminyl}-L-threonyl-[protein] + UDP + H(+). It carries out the reaction a beta-D-Gal-(1-&gt;4)-beta-D-GlcNAc-(1-&gt;3)-beta-D-Gal-(1-&gt;4)-beta-D-GlcNAc derivative + UDP-N-acetyl-alpha-D-glucosamine = a beta-D-Gal-(1-&gt;4)-beta-D-GlcNAc-(1-&gt;3)-[beta-D-GlcNAc-(1-&gt;6)]-beta-D-Gal-(1-&gt;4)-N-acetyl-beta-D-glucosaminyl derivative + UDP + H(+). It catalyses the reaction 3-O-[N-acetyl-beta-D-glucosaminyl-(1-&gt;3)-N-acetyl-alpha-D-galactosaminyl]-L-seryl-[protein] + UDP-N-acetyl-alpha-D-glucosamine = 3-O-[N-acetyl-beta-D-glucosaminyl-(1-&gt;3)-[N-acetyl-beta-D-glucosaminyl-(1-&gt;6)]-N-acetyl-alpha-D-galactosaminyl]-L-seryl-[protein] + UDP + H(+). The catalysed reaction is a 3-O-[N-acetyl-beta-D-glucosaminyl-(1-&gt;3)-N-acetyl-alpha-D-galactosaminyl]-L-threonyl-[protein] + UDP-N-acetyl-alpha-D-glucosamine = 3-O-[N-acetyl-beta-D-glucosaminyl-(1-&gt;3)-[N-acetyl-beta-D-glucosaminyl-(1-&gt;6)]-N-acetyl-alpha-D-galactosaminyl]-L-threonyl-[protein] + UDP + H(+). It functions in the pathway protein modification; protein glycosylation. In terms of biological role, glycosyltransferase that can synthesize all known mucin beta 6 N-acetylglucosaminides. Mediates core 2 and core 4 O-glycan branching, 2 important steps in mucin-type biosynthesis. Also has I-branching enzyme activity by converting linear into branched poly-N-acetyllactosaminoglycans, leading to introduce the blood group I antigen during embryonic development. The protein is Beta-1,3-galactosyl-O-glycosyl-glycoprotein beta-1,6-N-acetylglucosaminyltransferase 3 (GCNT3) of Homo sapiens (Human).